Reading from the N-terminus, the 173-residue chain is RNA pyrophosphohydrolase (173 aa).

Residues Gly-6–Arg-149 form the Nudix hydrolase domain. Positions Gly-38–Gly-59 match the Nudix box motif.

The protein belongs to the Nudix hydrolase family. RppH subfamily. A divalent metal cation serves as cofactor.

In terms of biological role, accelerates the degradation of transcripts by removing pyrophosphate from the 5'-end of triphosphorylated RNA, leading to a more labile monophosphorylated state that can stimulate subsequent ribonuclease cleavage. The sequence is that of RNA pyrophosphohydrolase from Thioalkalivibrio sulfidiphilus (strain HL-EbGR7).